Here is a 129-residue protein sequence, read N- to C-terminus: RxLR effector protein PexRD43 (129 aa).

The first 16 residues, 1 to 16, serve as a signal peptide directing secretion; it reads MRLAMILLSIPLFVSG. Positions 44–56 match the RxLR-dEER motif; that stretch reads RSLRTSGEANEER.

Belongs to the RxLR effector family.

It localises to the secreted. The protein resides in the host cytoplasm. Its subcellular location is the host nucleus. Functionally, effector that enhances P.infestans colonization of Nicotiana benthamiana leaves. The protein is RxLR effector protein PexRD43 of Phytophthora infestans (strain T30-4) (Potato late blight agent).